We begin with the raw amino-acid sequence, 382 residues long: MLEFETNIDGLASIKVIGVGGGGNNAVNRMIENEVQGVEYIAVNTDAQALNLSKAEVKMQIGAKLTRGLGAGANPEVGKKAAEESKEQIEEALKGADMVFVTAGMGGGTGTGAAPVIAQIAKDLGALTVGVVTRPFTFEGRKRQLQAAGGISAMKEAVDTLIVIPNDRILEIVDKNTPMLEAFREADNVLRQGVQGISDLIATPGLINLDFADVKTIMSNKGSALMGIGIATGENRAAEAAKKAISSPLLEAAIDGAQGVLMNITGGTNLSLYEVQEAADIVASASDQDVNMIFGSVINENLKDEIVVTVIATGFIEQEKDVTKPQRPSLNQSIKTHNQSVPKREPKREEPQQQNTVSRHTSQPADDTLDIPTFLRNRNKRG.

GTP is bound by residues 21 to 25 (GGGNN), 108 to 110 (GTG), glutamate 139, arginine 143, and aspartate 187. Residues 320–382 (KDVTKPQRPS…TFLRNRNKRG (63 aa)) are disordered. Polar residues predominate over residues 326 to 341 (QRPSLNQSIKTHNQSV). The span at 342-351 (PKREPKREEP) shows a compositional bias: basic and acidic residues. Residues 352–365 (QQQNTVSRHTSQPA) are compositionally biased toward polar residues.

It belongs to the FtsZ family. In terms of assembly, homodimer. Polymerizes to form a dynamic ring structure in a strictly GTP-dependent manner. Interacts directly with several other division proteins. Interacts with FtsA. Interacts with Phi29 DNA replication protein 1. Interacts with the cell division inhibitor MciZ.

It is found in the cytoplasm. With respect to regulation, during sporulation, is negatively regulated by MciZ, which binds to FtsZ and inhibits its polymerization and the formation of the Z ring. Essential cell division protein that forms a contractile ring structure (Z ring) at the future cell division site. The regulation of the ring assembly controls the timing and the location of cell division. One of the functions of the FtsZ ring is to recruit other cell division proteins to the septum to produce a new cell wall between the dividing cells. Binds GTP and shows GTPase activity. This is Cell division protein FtsZ from Bacillus subtilis (strain 168).